The following is a 298-amino-acid chain: Myoblast determination protein 1 homolog (298 aa).

A compositionally biased stretch (basic and acidic residues) spans 53-73 (PEEHPHTRAPPREPTEEEHVR). Residues 53-77 (PEEHPHTRAPPREPTEEEHVRAPSG) are disordered. Residues 100 to 151 (DRRKAATMRERRRLSKVNEAFETLKRCTSTNPNQRLPKVEILRNAIRYIESL) form the bHLH domain. 2 disordered regions span residues 170–220 (SGES…GKSS) and 242–298 (CPIL…YQVL). 2 stretches are compositionally biased toward polar residues: residues 173–183 (SDASSPRSNCS) and 257–284 (CSPQ…LPQE).

As to quaternary structure, efficient DNA binding requires dimerization with another bHLH protein. Seems to form active heterodimers with ITF-2.

It localises to the nucleus. Functionally, acts as a transcriptional activator that promotes transcription of muscle-specific target genes and plays a role in muscle differentiation. Induces fibroblasts to differentiate into myoblasts. Interacts with and is inhibited by the twist protein. This interaction probably involves the basic domains of both proteins. The polypeptide is Myoblast determination protein 1 homolog (MYOD1) (Gallus gallus (Chicken)).